Reading from the N-terminus, the 91-residue chain is Transcription factor znf27 (91 aa).

The protein localises to the nucleus. Transcription factor; part of the gene cluster 27 that mediates the biosynthesis of asparasone A, a sclerotium-specific anthraquinone pigment important for sclerotial survival. Controls the expression of the non-reducing polyketide synthase (NRPKS) pks27. The chain is Transcription factor znf27 from Aspergillus flavus (strain ATCC 200026 / FGSC A1120 / IAM 13836 / NRRL 3357 / JCM 12722 / SRRC 167).